A 345-amino-acid polypeptide reads, in one-letter code: Phosphoribosylformylglycinamidine cyclo-ligase (345 aa).

Belongs to the AIR synthase family.

The protein localises to the cytoplasm. The catalysed reaction is 2-formamido-N(1)-(5-O-phospho-beta-D-ribosyl)acetamidine + ATP = 5-amino-1-(5-phospho-beta-D-ribosyl)imidazole + ADP + phosphate + H(+). Its pathway is purine metabolism; IMP biosynthesis via de novo pathway; 5-amino-1-(5-phospho-D-ribosyl)imidazole from N(2)-formyl-N(1)-(5-phospho-D-ribosyl)glycinamide: step 2/2. The polypeptide is Phosphoribosylformylglycinamidine cyclo-ligase (Aeromonas hydrophila subsp. hydrophila (strain ATCC 7966 / DSM 30187 / BCRC 13018 / CCUG 14551 / JCM 1027 / KCTC 2358 / NCIMB 9240 / NCTC 8049)).